The sequence spans 231 residues: NADH-ubiquinone oxidoreductase chain 4 (231 aa).

A run of 6 helical transmembrane segments spans residues Pro1 to Ile21, Leu34 to Leu54, Ile63 to Gly85, Ala89 to Tyr111, Ile128 to Pro148, and Leu156 to Ser176.

This sequence belongs to the complex I subunit 4 family.

It is found in the mitochondrion membrane. It catalyses the reaction a ubiquinone + NADH + 5 H(+)(in) = a ubiquinol + NAD(+) + 4 H(+)(out). Functionally, core subunit of the mitochondrial membrane respiratory chain NADH dehydrogenase (Complex I) that is believed to belong to the minimal assembly required for catalysis. Complex I functions in the transfer of electrons from NADH to the respiratory chain. The immediate electron acceptor for the enzyme is believed to be ubiquinone. This chain is NADH-ubiquinone oxidoreductase chain 4 (MT-ND4), found in Crotalus concolor (Midget faded rattlesnake).